The sequence spans 171 residues: ATP synthase subunit b (171 aa).

A helical membrane pass occupies residues 2 to 22 (FVVKMVLGFLILLSPLCATGL).

Belongs to the ATPase B chain family. In terms of assembly, F-type ATPases have 2 components, F(1) - the catalytic core - and F(0) - the membrane proton channel. F(1) has five subunits: alpha(3), beta(3), gamma(1), delta(1), epsilon(1). F(0) has three main subunits: a(1), b(2) and c(10-14). The alpha and beta chains form an alternating ring which encloses part of the gamma chain. F(1) is attached to F(0) by a central stalk formed by the gamma and epsilon chains, while a peripheral stalk is formed by the delta and b chains.

The protein localises to the cell inner membrane. Functionally, f(1)F(0) ATP synthase produces ATP from ADP in the presence of a proton or sodium gradient. F-type ATPases consist of two structural domains, F(1) containing the extramembraneous catalytic core and F(0) containing the membrane proton channel, linked together by a central stalk and a peripheral stalk. During catalysis, ATP synthesis in the catalytic domain of F(1) is coupled via a rotary mechanism of the central stalk subunits to proton translocation. Component of the F(0) channel, it forms part of the peripheral stalk, linking F(1) to F(0). The sequence is that of ATP synthase subunit b from Helicobacter pylori (strain ATCC 700392 / 26695) (Campylobacter pylori).